The following is a 703-amino-acid chain: Polyribonucleotide nucleotidyltransferase (703 aa).

Mg(2+) is bound by residues Asp-484 and Asp-490. One can recognise a KH domain in the interval 551-610 (PTVTTLRVLPEKISVIIGPAGKNIKKIIEETGVKIDLDPTGLVKIYATSKIAAEKAIDMI). One can recognise an S1 motif domain in the interval 620-688 (GEVYLGKVTR…DQGRIKVSLK (69 aa)).

Belongs to the polyribonucleotide nucleotidyltransferase family. It depends on Mg(2+) as a cofactor.

It localises to the cytoplasm. The enzyme catalyses RNA(n+1) + phosphate = RNA(n) + a ribonucleoside 5'-diphosphate. Functionally, involved in mRNA degradation. Catalyzes the phosphorolysis of single-stranded polyribonucleotides processively in the 3'- to 5'-direction. The polypeptide is Polyribonucleotide nucleotidyltransferase (Sulfurihydrogenibium sp. (strain YO3AOP1)).